A 124-amino-acid polypeptide reads, in one-letter code: Multifunctional methyltransferase subunit TRM112 homolog B (124 aa).

The TRM112 domain maps to 2–120 (RLIVHNMLSC…SKGIPNMLLH (119 aa)).

This sequence belongs to the TRM112 family. In terms of assembly, interacts with TRM9. In terms of tissue distribution, expressed in anthers.

Its function is as follows. Acts as an activator of both rRNA/tRNA and protein methyltransferases. Required for TRM9 tRNA methyltransferase activity. The chain is Multifunctional methyltransferase subunit TRM112 homolog B from Arabidopsis thaliana (Mouse-ear cress).